The primary structure comprises 794 residues: Protein sel-1 homolog 1 (794 aa).

Positions 1-21 (MRVRIGLTLLLCAVLLSLASA) are cleaved as a signal peptide. The disordered stretch occupies residues 21–50 (ASSDEEGSQDESLDSKTTLTSDESVKDHTT). Residues 22 to 737 (SSDEEGSQDE…DMFTQLDMDQ (716 aa)) are interaction with ERLEC1, OS9 and SYVN1. At 22-738 (SSDEEGSQDE…MFTQLDMDQL (717 aa)) the chain is on the lumenal side. Residues 23 to 32 (SDEEGSQDES) show a composition bias toward acidic residues. Ser-63 bears the Phosphoserine mark. Residues 64–77 (EESELESSIQEEED) are compositionally biased toward acidic residues. Residues 64 to 109 (EESELESSIQEEEDSLKSQEGESVTEDISFLESPNPENKDYEEPKK) are disordered. The Fibronectin type-II domain maps to 122–170 (AHGEPCHFPFLFLDKEYDECTSDGREDGRLWCATTYDYKADEKWGFCET). Disulfide bonds link Cys-127-Cys-153 and Cys-141-Cys-168. Sel1-like repeat units follow at residues 183-218 (AEMM…SMNH), 219-254 (TKAL…EEGS), 255-290 (PKGQ…LGGN), 291-326 (LIAH…NHVA), 373-409 (VQAQ…NAGN), 410-446 (SHAM…DMGN), 447-482 (PVGQ…EQGW), 483-518 (VDGQ…QGGH), and 519-554 (ILAF…ERGR). N-linked (GlcNAc...) asparagine glycosylation is found at Asn-195 and Asn-217. Residue Asn-272 is glycosylated (N-linked (GlcNAc...) asparagine). The interval 352-537 (NSGMLEEDLI…MHASGTGVMR (186 aa)) is important for homodimerization and oligomerization. A glycan (N-linked (GlcNAc...) asparagine) is linked at Asn-431. Asn-608 is a glycosylation site (N-linked (GlcNAc...) asparagine). Sel1-like repeat units lie at residues 627–662 (TVAR…EQQH) and 664–699 (AQAM…EASP). Residues 643 to 723 (TDVDYETAFI…VVYFLQYIRE (81 aa)) form an interaction with SYVN1 region. Residues 738 to 794 (LLGPEWDLYLMTIIALLLGTVIAYRQRQHQDMPAPRPPGPRPAPPQQEGPPEQQPPQ) form a mediates retention in the endoplasmic reticulum region. A helical transmembrane segment spans residues 739–759 (LGPEWDLYLMTIIALLLGTVI). Residues 760–794 (AYRQRQHQDMPAPRPPGPRPAPPQQEGPPEQQPPQ) lie on the Cytoplasmic side of the membrane. The disordered stretch occupies residues 766–794 (HQDMPAPRPPGPRPAPPQQEGPPEQQPPQ). The segment covering 771 to 794 (APRPPGPRPAPPQQEGPPEQQPPQ) has biased composition (pro residues).

It belongs to the sel-1 family. In terms of assembly, homodimer and homooligomer. May form a complex with ERLEC1, HSPA5, OS9, and SYVN1. Interacts with FOXRED2 and EDEM1. Interacts with LPL. Interacts with LMF1; may stabilize the complex formed by LPL and LMF1 and thereby promote the export of LPL dimers. Component of the HRD1 complex, which comprises at least SYNV1/HRD1, DERL1/2, FAM8A1, HERPUD1/HERP, OS9, SEL1L and UBE2J1. SYNV1 assembles with SEL1L and FAM8A1 through its transmembrane domains, but interaction with its cytoplasmic domain is required to confer stability to FAM8A1 and enhance recruitment of HERPUD1. The interaction with SYNV1/HRD1 is direct. (Microbial infection) Interacts with human cytomegalovirus protein UL148. In terms of processing, N-glycosylated. In terms of tissue distribution, highly expressed in pancreas.

It is found in the endoplasmic reticulum membrane. In terms of biological role, plays a role in the endoplasmic reticulum quality control (ERQC) system also called ER-associated degradation (ERAD) involved in ubiquitin-dependent degradation of misfolded endoplasmic reticulum proteins. Enhances SYVN1 stability. Plays a role in LPL maturation and secretion. Required for normal differentiation of the pancreas epithelium, and for normal exocrine function and survival of pancreatic cells. May play a role in Notch signaling. In Homo sapiens (Human), this protein is Protein sel-1 homolog 1.